The primary structure comprises 86 residues: MAHKKGLGSSRNGRDSNAQRLGVKAFGGETVTGGTIIVRQRGTRIKPGLNVGRGKDDTLFAKADGRVEFKDRGNLGRFVSIVPAKA.

This sequence belongs to the bacterial ribosomal protein bL27 family.

This Koribacter versatilis (strain Ellin345) protein is Large ribosomal subunit protein bL27.